A 121-amino-acid polypeptide reads, in one-letter code: NADH-quinone oxidoreductase subunit A (121 aa).

The next 3 membrane-spanning stretches (helical) occupy residues 8–28, 65–85, and 93–113; these read YLPIFMQMGLAVGFVVLTIIG, LVAILFVLFDVEVIFLYPWAI, and QGMIKMVIFMSLLLVGFFYII.

Belongs to the complex I subunit 3 family. NDH-1 is composed of 14 different subunits. Subunits NuoA, H, J, K, L, M, N constitute the membrane sector of the complex.

The protein resides in the cell inner membrane. The catalysed reaction is a quinone + NADH + 5 H(+)(in) = a quinol + NAD(+) + 4 H(+)(out). Its function is as follows. NDH-1 shuttles electrons from NADH, via FMN and iron-sulfur (Fe-S) centers, to quinones in the respiratory chain. The immediate electron acceptor for the enzyme in this species is believed to be a menaquinone. Couples the redox reaction to proton translocation (for every two electrons transferred, four hydrogen ions are translocated across the cytoplasmic membrane), and thus conserves the redox energy in a proton gradient. This Flavobacterium psychrophilum (strain ATCC 49511 / DSM 21280 / CIP 103535 / JIP02/86) protein is NADH-quinone oxidoreductase subunit A.